The chain runs to 188 residues: UPF0340 protein SSU98_0310 (188 aa).

This sequence belongs to the UPF0340 family.

In Streptococcus suis (strain 98HAH33), this protein is UPF0340 protein SSU98_0310.